A 365-amino-acid chain; its full sequence is MDNSTGTWEGCHVDSRVDHLFPPSLYIFVIGVGLPTNCLALWAAYRQVRQRNELGVYLMNLSIADLLYICTLPLWVDYFLHHDNWIHGPGSCKLFGFIFYSNIYISIAFLCCISVDRYLAVAHPLRFARLRRVKTAVAVSSVVWATELGANSAPLFHDELFRDRYNHTFCFEKFPMERWVAWMNLYRVFVGFLFPWALMLLCYRGILRAVQSSVSTERQEKVKIKRLALSLIAIVLVCFAPYHALLLSRSAVYLGRPWDCGFEERVFSAYHSSLAFTSLNCVADPILYCLVNEGARSDVAKALHNLLRFLASNKPQEMANASLTLETPLTSKRSTTGKTSGAVWAVPPTAQGDQVPLKVLLPPAQ.

Over 1–10 (MDNSTGTWEG) the chain is Extracellular. A glycan (N-linked (GlcNAc...) asparagine) is linked at Asn3. A helical transmembrane segment spans residues 11-47 (CHVDSRVDHLFPPSLYIFVIGVGLPTNCLALWAAYRQ). Disulfide bonds link Cys11-Cys260 and Cys92-Cys170. Residues 48–51 (VRQR) are Cytoplasmic-facing. A helical transmembrane segment spans residues 52–82 (NELGVYLMNLSIADLLYICTLPLWVDYFLHH). Over 83–87 (DNWIH) the chain is Extracellular. A helical transmembrane segment spans residues 88–123 (GPGSCKLFGFIFYSNIYISIAFLCCISVDRYLAVAH). Residues 124-131 (PLRFARLR) lie on the Cytoplasmic side of the membrane. The chain crosses the membrane as a helical span at residues 132-158 (RVKTAVAVSSVVWATELGANSAPLFHD). The Extracellular portion of the chain corresponds to 159–174 (ELFRDRYNHTFCFEKF). The interval 159–174 (ELFRDRYNHTFCFEKF) is extracellular loop 2 (ECL2). A glycan (N-linked (GlcNAc...) asparagine) is linked at Asn166. Residues 175-212 (PMERWVAWMNLYRVFVGFLFPWALMLLCYRGILRAVQS) form a helical membrane-spanning segment. Over 213 to 216 (SVST) the chain is Cytoplasmic. The chain crosses the membrane as a helical span at residues 217–252 (ERQEKVKIKRLALSLIAIVLVCFAPYHALLLSRSAV). Over 253–262 (YLGRPWDCGF) the chain is Extracellular. The helical transmembrane segment at 263–291 (EERVFSAYHSSLAFTSLNCVADPILYCLV) threads the bilayer. At 292 to 365 (NEGARSDVAK…PLKVLLPPAQ (74 aa)) the chain is on the cytoplasmic side.

Belongs to the G-protein coupled receptor 1 family.

The protein localises to the cell membrane. With respect to regulation, activated by a network of residues that connects an extracellular-facing cavity to Glu-147, a conserved charged residue buried in the transmembrane core of the receptor. Protonation likely drives conformational changes in extracellular loop 2 (ECL2), which stabilizes movement of transmembrane 3 (TM3) and a series of rearrangements that connect the extracellular-facing cavity to Glu-147, a residue only conserved in proton-sensing G-protein coupled receptors. Its function is as follows. Proton-sensing G-protein coupled receptor activated by extracellular pH, which is required to monitor pH changes and generate adaptive reactions. Activated by an optimal pH of 6.8-7.2. Ligand binding causes a conformation change that triggers signaling via guanine nucleotide-binding proteins (G proteins) and modulates the activity of downstream effectors, such as adenylate cyclase. GPR4 is mainly coupled to G(s) G proteins and mediates activation of adenylate cyclase activity. May also couple with G(q) and G(12)/G(13) G proteins. Acts as a key regulator of respiratory sensitivity to CO2/H(+) in brain retrotrapezoid nucleus neurons: acts by mediating detection of protons generated by the formation of carbonic acid in the blood, an important mechanism to impulse to breathe. Also acts as a regulator of acid secretion in the kidney collecting duct by maintaining acid-base homeostasis in the kidney. Acidosis-induced GPR4 activation increases paracellular gap formation and permeability of vascular endothelial cells, possibly through the G(12)/G(13)/Rho GTPase signaling pathway. The polypeptide is G-protein coupled receptor 4 (Rattus norvegicus (Rat)).